Here is an 802-residue protein sequence, read N- to C-terminus: Phenylalanine--tRNA ligase beta subunit (802 aa).

The tRNA-binding domain occupies 39–154 (AEGLSKLVVG…EDAVPGDSIF (116 aa)). The B5 domain maps to 407-482 (TEPVQVSTSL…RIYGYEKLPT (76 aa)). Residues Asp-460, Asp-466, Glu-469, and Glu-470 each contribute to the Mg(2+) site. Residues 709 to 802 (TKFPAVSRDI…LTEKVEAEVR (94 aa)) form the FDX-ACB domain.

Belongs to the phenylalanyl-tRNA synthetase beta subunit family. Type 1 subfamily. Tetramer of two alpha and two beta subunits. Mg(2+) serves as cofactor.

It is found in the cytoplasm. It carries out the reaction tRNA(Phe) + L-phenylalanine + ATP = L-phenylalanyl-tRNA(Phe) + AMP + diphosphate + H(+). The polypeptide is Phenylalanine--tRNA ligase beta subunit (Streptococcus thermophilus (strain CNRZ 1066)).